Consider the following 574-residue polypeptide: 2-succinyl-5-enolpyruvyl-6-hydroxy-3-cyclohexene-1-carboxylate synthase (574 aa).

Belongs to the TPP enzyme family. MenD subfamily. In terms of assembly, homodimer. The cofactor is Mg(2+). Requires Mn(2+) as cofactor. It depends on thiamine diphosphate as a cofactor.

The enzyme catalyses isochorismate + 2-oxoglutarate + H(+) = 5-enolpyruvoyl-6-hydroxy-2-succinyl-cyclohex-3-ene-1-carboxylate + CO2. Its pathway is quinol/quinone metabolism; 1,4-dihydroxy-2-naphthoate biosynthesis; 1,4-dihydroxy-2-naphthoate from chorismate: step 2/7. The protein operates within cofactor biosynthesis; phylloquinone biosynthesis. Functionally, catalyzes the thiamine diphosphate-dependent decarboxylation of 2-oxoglutarate and the subsequent addition of the resulting succinic semialdehyde-thiamine pyrophosphate anion to isochorismate to yield 2-succinyl-5-enolpyruvyl-6-hydroxy-3-cyclohexene-1-carboxylate (SEPHCHC). In Prochlorococcus marinus (strain SARG / CCMP1375 / SS120), this protein is 2-succinyl-5-enolpyruvyl-6-hydroxy-3-cyclohexene-1-carboxylate synthase.